Reading from the N-terminus, the 298-residue chain is Uricase (298 aa).

Catalysis depends on charge relay system residues lysine 18 and threonine 63. Threonine 63, aspartate 64, phenylalanine 165, arginine 182, valine 229, glutamine 230, and asparagine 256 together coordinate urate. The active-site Charge relay system is the histidine 258. The Microbody targeting signal motif lies at alanine 296–methionine 298.

Belongs to the uricase family. Homotetramer; dimer of dimers.

It is found in the peroxisome. It catalyses the reaction urate + O2 + H2O = 5-hydroxyisourate + H2O2. Its pathway is purine metabolism; urate degradation; (S)-allantoin from urate: step 1/3. With respect to regulation, competitively inhibited by xanthine. In terms of biological role, catalyzes the oxidation of uric acid to 5-hydroxyisourate, which is further processed to form (S)-allantoin. The polypeptide is Uricase (Danio rerio (Zebrafish)).